A 594-amino-acid chain; its full sequence is Parathyroid hormone/parathyroid hormone-related peptide receptor (594 aa).

The signal sequence occupies residues 1–28 (MGTARIAPGLALLLCCPVLSSAYALVDA). Over 29–188 (DDVMTKEEQI…TREREVFDRL (160 aa)) the chain is Extracellular. 3 cysteine pairs are disulfide-bonded: Cys48/Cys117, Cys108/Cys149, and Cys132/Cys171. Positions 66–102 (DKGWTSASTSGKPRKDKASGKLYPESEEDKEAPTDSR) are disordered. N-linked (GlcNAc...) asparagine glycans are attached at residues Asn152, Asn162, Asn167, and Asn177. Residues 189-209 (GMIYTVGYSMSLASLTVAVLI) form a helical membrane-spanning segment. The Cytoplasmic portion of the chain corresponds to 210-223 (LAYFRRLHCTRNYI). The chain crosses the membrane as a helical span at residues 224-244 (HMHLFLSFMLRAVSIFVKDAV). At 245–295 (LYSGATLDEAERLTEEELRAIAQAPPPPATAAAGYAGCRVAVTFFLYFLAT) the chain is on the extracellular side. Residues 296–316 (NYYWILVEGLYLHSLIFMAFF) form a helical membrane-spanning segment. The Cytoplasmic portion of the chain corresponds to 317-319 (SEK). The helical transmembrane segment at 320 to 340 (KYLWGFTVFGWGLPAVFVAVW) threads the bilayer. At 341-361 (VSVRATLANTGCWDLSSGNKK) the chain is on the extracellular side. Residues 362 to 382 (WIIQVPILASIVLHFILFINI) traverse the membrane as a helical segment. At 383–405 (VRVLATKLRETNAGRCDTRQQYR) the chain is on the cytoplasmic side. A helical transmembrane segment spans residues 406–426 (KLLKSTLVLMPLFGVHYIVFM). At 427-440 (ATPYTEVSGTLWQV) the chain is on the extracellular side. A helical transmembrane segment spans residues 441 to 461 (QMHYEMLFNSFQGFFVAIIYC). Residues 462–594 (FCNGEVQAEI…LLQEEWETVM (133 aa)) are Cytoplasmic-facing. An Important for interaction with G proteins motif is present at residues 475-478 (WSRW). The tract at residues 525-594 (PTATTNGHPQ…LLQEEWETVM (70 aa)) is disordered. Residues 543–558 (TPALETLETTPPATAA) show a composition bias toward low complexity. Thr552 is modified (phosphothreonine).

The protein belongs to the G-protein coupled receptor 2 family. Homodimer in the absence of bound ligand. Peptide hormone binding leads to dissociation of the homodimer. N-glycosylated.

The protein resides in the cell membrane. Functionally, G-protein-coupled receptor for parathyroid hormone (PTH) and for parathyroid hormone-related peptide (PTHLH). Ligand binding causes a conformation change that triggers signaling via guanine nucleotide-binding proteins (G proteins) and modulates the activity of downstream effectors, such as adenylate cyclase (cAMP). PTH1R is coupled to G(s) G alpha proteins and mediates activation of adenylate cyclase activity. PTHLH dissociates from PTH1R more rapidly than PTH; as consequence, the cAMP response induced by PTHLH decays faster than the response induced by PTH. The sequence is that of Parathyroid hormone/parathyroid hormone-related peptide receptor (PTH1R) from Pongo abelii (Sumatran orangutan).